The chain runs to 301 residues: tRNA dimethylallyltransferase (301 aa).

12-19 is an ATP binding site; sequence GPTAVGKT. Position 14 to 19 (14 to 19) interacts with substrate; the sequence is TAVGKT. Residues 37 to 40 are interaction with substrate tRNA; it reads DSQQ.

The protein belongs to the IPP transferase family. In terms of assembly, monomer. It depends on Mg(2+) as a cofactor.

The enzyme catalyses adenosine(37) in tRNA + dimethylallyl diphosphate = N(6)-dimethylallyladenosine(37) in tRNA + diphosphate. Catalyzes the transfer of a dimethylallyl group onto the adenine at position 37 in tRNAs that read codons beginning with uridine, leading to the formation of N6-(dimethylallyl)adenosine (i(6)A). The protein is tRNA dimethylallyltransferase of Streptococcus uberis (strain ATCC BAA-854 / 0140J).